We begin with the raw amino-acid sequence, 207 residues long: 3-isopropylmalate dehydratase small subunit (207 aa).

The protein belongs to the LeuD family. LeuD type 1 subfamily. In terms of assembly, heterodimer of LeuC and LeuD.

The catalysed reaction is (2R,3S)-3-isopropylmalate = (2S)-2-isopropylmalate. It participates in amino-acid biosynthesis; L-leucine biosynthesis; L-leucine from 3-methyl-2-oxobutanoate: step 2/4. Its function is as follows. Catalyzes the isomerization between 2-isopropylmalate and 3-isopropylmalate, via the formation of 2-isopropylmaleate. In Rhodospirillum rubrum (strain ATCC 11170 / ATH 1.1.1 / DSM 467 / LMG 4362 / NCIMB 8255 / S1), this protein is 3-isopropylmalate dehydratase small subunit.